We begin with the raw amino-acid sequence, 117 residues long: Large ribosomal subunit protein bL20 (117 aa).

Belongs to the bacterial ribosomal protein bL20 family.

Its function is as follows. Binds directly to 23S ribosomal RNA and is necessary for the in vitro assembly process of the 50S ribosomal subunit. It is not involved in the protein synthesizing functions of that subunit. The polypeptide is Large ribosomal subunit protein bL20 (Actinobacillus pleuropneumoniae serotype 7 (strain AP76)).